The chain runs to 66 residues: Large ribosomal subunit protein uL29 (66 aa).

Belongs to the universal ribosomal protein uL29 family.

The protein is Large ribosomal subunit protein uL29 of Bacillus mycoides (strain KBAB4) (Bacillus weihenstephanensis).